A 131-amino-acid polypeptide reads, in one-letter code: NADPH-dependent 7-cyano-7-deazaguanine reductase (131 aa).

The active-site Thioimide intermediate is C48. D55 (proton donor) is an active-site residue. Substrate-binding positions include 70-72 (VEL) and 89-90 (QE).

The protein belongs to the GTP cyclohydrolase I family. QueF type 1 subfamily.

The protein resides in the cytoplasm. The catalysed reaction is 7-aminomethyl-7-carbaguanine + 2 NADP(+) = 7-cyano-7-deazaguanine + 2 NADPH + 3 H(+). Its pathway is tRNA modification; tRNA-queuosine biosynthesis. Functionally, catalyzes the NADPH-dependent reduction of 7-cyano-7-deazaguanine (preQ0) to 7-aminomethyl-7-deazaguanine (preQ1). The protein is NADPH-dependent 7-cyano-7-deazaguanine reductase of Caldicellulosiruptor bescii (strain ATCC BAA-1888 / DSM 6725 / KCTC 15123 / Z-1320) (Anaerocellum thermophilum).